We begin with the raw amino-acid sequence, 160 residues long: Cyclic pyranopterin monophosphate synthase (160 aa).

Substrate contacts are provided by residues L76 to H78 and M114 to E115. D129 is a catalytic residue.

This sequence belongs to the MoaC family. As to quaternary structure, homohexamer; trimer of dimers.

The catalysed reaction is (8S)-3',8-cyclo-7,8-dihydroguanosine 5'-triphosphate = cyclic pyranopterin phosphate + diphosphate. Its pathway is cofactor biosynthesis; molybdopterin biosynthesis. Catalyzes the conversion of (8S)-3',8-cyclo-7,8-dihydroguanosine 5'-triphosphate to cyclic pyranopterin monophosphate (cPMP). The polypeptide is Cyclic pyranopterin monophosphate synthase (Saccharophagus degradans (strain 2-40 / ATCC 43961 / DSM 17024)).